A 428-amino-acid chain; its full sequence is Lipoamide acyltransferase component of branched-chain alpha-keto acid dehydrogenase complex (428 aa).

The Lipoyl-binding domain occupies Thr-3–Glu-78. An N6-lipoyllysine modification is found at Lys-44. The interval Ser-88–Val-145 is disordered. Residues Pro-89–Pro-120 show a composition bias toward low complexity. Basic and acidic residues predominate over residues Arg-121 to Gly-136. Positions Leu-140–Leu-177 constitute a Peripheral subunit-binding (PSBD) domain. Catalysis depends on residues His-400 and Asp-404.

It belongs to the 2-oxoacid dehydrogenase family. Forms a 24-polypeptide structural core with octahedral symmetry. Requires (R)-lipoate as cofactor.

The enzyme catalyses N(6)-[(R)-dihydrolipoyl]-L-lysyl-[protein] + 2-methylpropanoyl-CoA = N(6)-[(R)-S(8)-2-methylpropanoyldihydrolipoyl]-L-lysyl-[protein] + CoA. Functionally, the branched-chain alpha-keto dehydrogenase complex catalyzes the overall conversion of alpha-keto acids to acyl-CoA and CO(2). It contains multiple copies of three enzymatic components: branched-chain alpha-keto acid decarboxylase (E1), lipoamide acyltransferase (E2) and lipoamide dehydrogenase (E3). The chain is Lipoamide acyltransferase component of branched-chain alpha-keto acid dehydrogenase complex (bkdB) from Pseudomonas aeruginosa (strain ATCC 15692 / DSM 22644 / CIP 104116 / JCM 14847 / LMG 12228 / 1C / PRS 101 / PAO1).